The following is a 238-amino-acid chain: Segregation and condensation protein A (238 aa).

Belongs to the ScpA family. Component of a cohesin-like complex composed of ScpA, ScpB and the Smc homodimer, in which ScpA and ScpB bind to the head domain of Smc. The presence of the three proteins is required for the association of the complex with DNA.

It is found in the cytoplasm. Functionally, participates in chromosomal partition during cell division. May act via the formation of a condensin-like complex containing Smc and ScpB that pull DNA away from mid-cell into both cell halves. This Macrococcus caseolyticus (strain JCSC5402) (Macrococcoides caseolyticum) protein is Segregation and condensation protein A.